Reading from the N-terminus, the 247-residue chain is DNA polymerase sliding clamp (247 aa).

It belongs to the PCNA family. In terms of assembly, homotrimer. The subunits circularize to form a toroid; DNA passes through its center. Replication factor C (RFC) is required to load the toroid on the DNA.

In terms of biological role, sliding clamp subunit that acts as a moving platform for DNA processing. Responsible for tethering the catalytic subunit of DNA polymerase and other proteins to DNA during high-speed replication. This Methanoregula boonei (strain DSM 21154 / JCM 14090 / 6A8) protein is DNA polymerase sliding clamp.